The chain runs to 96 residues: Co-chaperonin GroES (96 aa).

It belongs to the GroES chaperonin family. As to quaternary structure, heptamer of 7 subunits arranged in a ring. Interacts with the chaperonin GroEL.

It is found in the cytoplasm. In terms of biological role, together with the chaperonin GroEL, plays an essential role in assisting protein folding. The GroEL-GroES system forms a nano-cage that allows encapsulation of the non-native substrate proteins and provides a physical environment optimized to promote and accelerate protein folding. GroES binds to the apical surface of the GroEL ring, thereby capping the opening of the GroEL channel. This is Co-chaperonin GroES from Leptothrix cholodnii (strain ATCC 51168 / LMG 8142 / SP-6) (Leptothrix discophora (strain SP-6)).